Consider the following 219-residue polypeptide: Small ribosomal subunit protein uS3c (219 aa).

The 76-residue stretch at 43–118 folds into the KH type-2 domain; sequence IKNYVQKNMK…KLNIAITRIA (76 aa).

This sequence belongs to the universal ribosomal protein uS3 family. As to quaternary structure, part of the 30S ribosomal subunit.

The protein resides in the plastid. The protein localises to the chloroplast. The sequence is that of Small ribosomal subunit protein uS3c (rps3) from Panax ginseng (Korean ginseng).